A 164-amino-acid polypeptide reads, in one-letter code: Thioredoxin domain-containing protein R443 (164 aa).

A helical membrane pass occupies residues H8–C28. The Thioredoxin domain occupies Y36–N163. A disulfide bridge links C84 with C87.

The protein belongs to the thioredoxin family.

Its subcellular location is the host membrane. The protein localises to the virion. The polypeptide is Thioredoxin domain-containing protein R443 (Acanthamoeba polyphaga mimivirus (APMV)).